A 304-amino-acid chain; its full sequence is Cbb3-type cytochrome c oxidase subunit CcoP (304 aa).

Helical transmembrane passes span 11 to 31 (LYVA…LIVA) and 61 to 81 (WWAG…ALYP). 2 Cytochrome c domains span residues 129–209 (QAMA…LSLS) and 216–296 (VAAQ…WSLS). The heme c site is built by Cys-142, Cys-145, His-146, Met-185, Cys-228, Cys-231, His-232, and Met-273.

Belongs to the CcoP / FixP family. As to quaternary structure, component of the cbb3-type cytochrome c oxidase at least composed of CcoN, CcoO, CcoQ and CcoP. Requires heme c as cofactor.

It localises to the cell inner membrane. It participates in energy metabolism; oxidative phosphorylation. C-type cytochrome. Part of the cbb3-type cytochrome c oxidase complex. CcoP subunit is required for transferring electrons from donor cytochrome c via its heme groups to CcoO subunit. From there, electrons are shuttled to the catalytic binuclear center of CcoN subunit where oxygen reduction takes place. The complex also functions as a proton pump. The chain is Cbb3-type cytochrome c oxidase subunit CcoP from Rubrivivax gelatinosus (Rhodocyclus gelatinosus).